The primary structure comprises 263 residues: uncharacterized protein (263 aa).

A coiled-coil region spans residues 72-168 (LDKKETKELS…RTIVEIRNTK (97 aa)). Residues 76-158 (ETKELSKKEK…EKKEKKEKED (83 aa)) form a disordered region. Residues 83 to 95 (KEKKQLKKEKKAL) are compositionally biased toward basic residues. Over residues 96-107 (KKENKGGKDKKD) the composition is skewed to basic and acidic residues. Residues 108–121 (KKDKKDKKDKKDKK) show a composition bias toward basic residues. 2 stretches are compositionally biased toward basic and acidic residues: residues 122-131 (DKKDKGDKKD) and 139-158 (KHDDDKSEVKEKKEKKEKED).

This is an uncharacterized protein from Dictyostelium discoideum (Social amoeba).